The sequence spans 105 residues: MADWDGKYISPYAEHGKKSEQVKKITVSIPIKVLEILTNERTRRQLKSLRHATNSELLCEAFLHAFTGQPLPTDADLMKERNDEIPEDAKVLMRELGVDPESWEY.

It belongs to the MetJ family. Homodimer.

The protein resides in the cytoplasm. This regulatory protein, when combined with SAM (S-adenosylmethionine) represses the expression of the methionine regulon and of enzymes involved in SAM synthesis. The chain is Met repressor from Haemophilus influenzae (strain 86-028NP).